Here is a 23-residue protein sequence, read N- to C-terminus: Large ribosomal subunit protein uL10 (23 aa).

The protein belongs to the universal ribosomal protein uL10 family. In terms of assembly, part of the ribosomal stalk of the 50S ribosomal subunit. The N-terminus interacts with L11 and the large rRNA to form the base of the stalk. The C-terminus forms an elongated spine to which L12 dimers bind in a sequential fashion forming a multimeric L10(L12)X complex.

Its function is as follows. Forms part of the ribosomal stalk, playing a central role in the interaction of the ribosome with GTP-bound translation factors. This Klebsiella pneumoniae protein is Large ribosomal subunit protein uL10 (rplJ).